We begin with the raw amino-acid sequence, 650 residues long: DNA gyrase subunit B (650 aa).

Positions 400 to 414 are enriched in basic and acidic residues; sequence RRSQEARELTRRKSP. A disordered region spans residues 400-422; sequence RRSQEARELTRRKSPFDSGSLPG. The region spanning 435 to 549 is the Toprim domain; the sequence is SELYIVEGDS…QGNIYIAQPP (115 aa). The Mg(2+) site is built by Glu-441, Asp-514, and Asp-516.

This sequence belongs to the type II topoisomerase GyrB family. In terms of assembly, heterotetramer, composed of two GyrA and two GyrB chains. In the heterotetramer, GyrA contains the active site tyrosine that forms a transient covalent intermediate with DNA, while GyrB binds cofactors and catalyzes ATP hydrolysis. Mg(2+) is required as a cofactor. Requires Mn(2+) as cofactor. The cofactor is Ca(2+).

Its subcellular location is the cytoplasm. It carries out the reaction ATP-dependent breakage, passage and rejoining of double-stranded DNA.. A type II topoisomerase that negatively supercoils closed circular double-stranded (ds) DNA in an ATP-dependent manner to modulate DNA topology and maintain chromosomes in an underwound state. Negative supercoiling favors strand separation, and DNA replication, transcription, recombination and repair, all of which involve strand separation. Also able to catalyze the interconversion of other topological isomers of dsDNA rings, including catenanes and knotted rings. Type II topoisomerases break and join 2 DNA strands simultaneously in an ATP-dependent manner. The chain is DNA gyrase subunit B from Mycoplasma pneumoniae (strain ATCC 29342 / M129 / Subtype 1) (Mycoplasmoides pneumoniae).